The following is a 157-amino-acid chain: Beta-defensin 125 (157 aa).

Positions 1 to 20 are cleaved as a signal peptide; it reads MNILMLTFIICGLLTQVTKG. Intrachain disulfides connect Cys-27–Cys-55, Cys-35–Cys-49, and Cys-39–Cys-56. The disordered stretch occupies residues 109 to 157; the sequence is GETMTPETNTPETTVPPSETTTPETTMPPSETATSETMPPPSQTALTHN. Over residues 110–145 the composition is skewed to low complexity; sequence ETMTPETNTPETTVPPSETTTPETTMPPSETATSET.

The protein belongs to the beta-defensin family.

It is found in the secreted. Functionally, has antibacterial activity. The sequence is that of Beta-defensin 125 (DEFB125) from Gorilla gorilla gorilla (Western lowland gorilla).